Here is a 1402-residue protein sequence, read N- to C-terminus: DNA-directed RNA polymerase subunit beta' (1402 aa).

Residues Cys-72, Cys-74, Cys-87, and Cys-90 each coordinate Zn(2+). Mg(2+)-binding residues include Asp-463, Asp-465, and Asp-467. The Zn(2+) site is built by Cys-811, Cys-885, Cys-892, and Cys-895.

The protein belongs to the RNA polymerase beta' chain family. The RNAP catalytic core consists of 2 alpha, 1 beta, 1 beta' and 1 omega subunit. When a sigma factor is associated with the core the holoenzyme is formed, which can initiate transcription. It depends on Mg(2+) as a cofactor. Zn(2+) serves as cofactor.

It carries out the reaction RNA(n) + a ribonucleoside 5'-triphosphate = RNA(n+1) + diphosphate. Its function is as follows. DNA-dependent RNA polymerase catalyzes the transcription of DNA into RNA using the four ribonucleoside triphosphates as substrates. The polypeptide is DNA-directed RNA polymerase subunit beta' (Paracoccus denitrificans (strain Pd 1222)).